The primary structure comprises 242 residues: MRVPVRWVLWDVKDTLLKVRRSVGEQYCREAQQAGLQLSPAQVETAFRLAYKQKSQLLPNYGRAQGMDSQVWWTGLVRDTFGQCGVHDPALLDKLANNLYHNFCGPENWEVFSDSNSTLKSCTALGLKQGVVSNFDRRLEGILRGCGLLTHFSFIVTSEDARVAKPDPAIFSQALERCGVPASSVVHVGDHYVKDYLTSRSLGIRGYLLNRKDGQKTHLDIPPEHILQSLDELPARLQHNTD.

This sequence belongs to the HAD-like hydrolase superfamily.

This Danio rerio (Zebrafish) protein is Haloacid dehalogenase-like hydrolase domain-containing protein 3 (hdhd3).